The primary structure comprises 1245 residues: Structural polyprotein (1245 aa).

The tract at residues Met1–Met106 is disordered. The interval Gly37–Arg70 is host transcription inhibition. Over residues Leu38–Val49 the composition is skewed to polar residues. A Nuclear localization signal motif is present at residues Pro63–Pro100. Over residues Pro67–Met106 the composition is skewed to basic residues. Residues Lys86–Leu115 are binding to the viral RNA. Residues Pro100–Arg114 form a ribosome-binding region. The Peptidase S3 domain maps to Arg114–Trp264. His141 serves as the catalytic Charge relay system. The Nuclear export signal signature appears at Ile146–Phe156. Residues Thr157 to Tyr162 are interaction with spike glycoprotein E2. The active-site Charge relay system is Asp163. Residues Pro185–Ala195 form a dimerization of the capsid protein region. Ser215 functions as the Charge relay system in the catalytic mechanism. Positions Asp221–Arg225 are dimerization of the capsid protein. The interval Ser249 to Thr253 is interaction with spike glycoprotein E2. The functions as an uncleaved signal peptide for the precursor of protein E3/E2 stretch occupies residues Ser265–Val279. Asn278 carries an N-linked (GlcNAc...) asparagine; by host glycan. Disulfide bonds link Cys283–Cys289, Cys480–Cys594, Cys529–Cys554, and Cys531–Cys548. The Extracellular portion of the chain corresponds to Ser329–Arg690. A glycan (N-linked (GlcNAc...) asparagine; by host) is linked at Asn524. Asn646 is a glycosylation site (N-linked (GlcNAc...) asparagine; by host). A coiled-coil region spans residues Glu682 to Leu730. The chain crosses the membrane as a helical span at residues His691–Cys718. An interaction with the capsid protein region spans residues Lys719 to Glu723. The Cytoplasmic segment spans residues Lys719–Ala751. 3 S-palmitoyl cysteine; by host lipidation sites follow: Cys724, Cys744, and Cys745. Residues Cys724 and Cys745 are joined by a disulfide bond. The Extracellular portion of the chain corresponds to Glu752–Ser763. Residues Asn764 to Met784 form a helical membrane-spanning segment. Arg785 is a topological domain (cytoplasmic). The helical transmembrane segment at Cys786–Ala806 threads the bilayer. The Extracellular portion of the chain corresponds to Tyr807 to Ser1214. 4 cysteine pairs are disulfide-bonded: Cys855–Cys920, Cys868–Cys900, Cys869–Cys902, and Cys874–Cys884. Residues Val890–Ser907 form an E1 fusion peptide loop region. N-linked (GlcNAc...) asparagine; by host glycans are attached at residues Asn945 and Asn1051. 4 cysteine pairs are disulfide-bonded: Cys1065–Cys1077, Cys1107–Cys1182, Cys1112–Cys1186, and Cys1134–Cys1176. Residues Thr1196–Arg1245 are a coiled coil. The helical transmembrane segment at Trp1215–Met1239 threads the bilayer. The Cytoplasmic portion of the chain corresponds to Leu1240 to Arg1245.

This sequence belongs to the alphavirus structural polyprotein family. In terms of assembly, homomultimer. Interacts with host karyopherin KPNA4; this interaction allows the nuclear import of the viral capsid protein. Interacts with spike glycoprotein E2. Interacts with host IRAK1; the interaction leads to inhibition of IRAK1-dependent signaling. As to quaternary structure, the precursor of protein E3/E2 and E1 form a heterodimer shortly after synthesis. The precursor of protein E3/E2 and E1 form a heterodimer shortly after synthesis. Processing of the precursor of protein E3/E2 into E2 and E3 results in a heterodimer of the spike glycoproteins E2 and E1. Spike at virion surface are constituted of a trimer of E2-E1 heterodimers. After target cell attachment and endocytosis, E1 change conformation to form homotrimers. E2-E1 heterodimers interact with host VLDLR or LRP8/APOER2 to mediate viral entry. Interacts with 6K protein. In terms of assembly, interacts with spike glycoprotein E1. Processing of the precursor of protein E3/E2 into E2 and E3 results in a heterodimer of the spike glycoproteins E2 and E1. Spike at virion surface are constituted of a trimer of E2-E1 heterodimers. E2-E1 heterodimers interact with host VLDLR or LRP8/APOER2 to mediate viral entry. Interacts with 6K protein. Interacts with the capsid protein. As to quaternary structure, oligomer. Interacts with spike glycoprotein E1. Interacts with spike glycoprotein E2. Post-translationally, specific enzymatic cleavages in vivo yield mature proteins. Capsid protein is auto-cleaved during polyprotein translation, unmasking a signal peptide at the N-terminus of the precursor of E3/E2. The remaining polyprotein is then targeted to the host endoplasmic reticulum, where host signal peptidase cleaves it into pE2, 6K and E1 proteins. pE2 is further processed to mature E3 and E2 by host furin in trans-Golgi vesicle. In terms of processing, palmitoylated via thioester bonds. These palmitoylations may induce disruption of the C-terminus transmembrane. This would result in the reorientation of E2 C-terminus from lumenal to cytoplasmic side. N-glycosylated. Post-translationally, palmitoylated via thioester bonds.

It is found in the virion. Its subcellular location is the host cytoplasm. It localises to the host cell membrane. The protein localises to the host nucleus. The protein resides in the virion membrane. It is found in the host Golgi apparatus. Its subcellular location is the host trans-Golgi network. It localises to the host endoplasmic reticulum. The enzyme catalyses Autocatalytic release of the core protein from the N-terminus of the togavirus structural polyprotein by hydrolysis of a -Trp-|-Ser- bond.. Its activity is regulated as follows. The channel activity is blocked by 5-N, N-Hexamethylene amiloride. Forms an icosahedral capsid with a T=4 symmetry composed of 240 copies of the capsid protein surrounded by a lipid membrane through which penetrate 80 spikes composed of trimers of E1-E2 heterodimers. The capsid protein binds to the viral RNA genome at a site adjacent to a ribosome binding site for viral genome translation following genome release. Possesses a protease activity that results in its autocatalytic cleavage from the nascent structural protein. Following its self-cleavage, the capsid protein transiently associates with ribosomes, and within several minutes the protein binds to viral RNA and rapidly assembles into icosahedric core particles. The resulting nucleocapsid eventually associates with the cytoplasmic domain of the spike glycoprotein E2 at the cell membrane, leading to budding and formation of mature virions. In case of infection, new virions attach to target cells and after clathrin-mediated endocytosis their membrane fuses with the host endosomal membrane. This leads to the release of the nucleocapsid into the cytoplasm, followed by an uncoating event necessary for the genomic RNA to become accessible. The uncoating might be triggered by the interaction of capsid proteins with ribosomes. Binding of ribosomes would release the genomic RNA since the same region is genomic RNA-binding and ribosome-binding. Specifically inhibits interleukin-1 receptor-associated kinase 1/IRAK1-dependent signaling during viral entry, representing a means by which the alphaviruses may evade innate immune detection and activation prior to viral gene expression. Functionally, provides the signal sequence for the translocation of the precursor of protein E3/E2 to the host endoplasmic reticulum. Furin-cleaved E3 remains associated with spike glycoprotein E1 and mediates pH protection of the latter during the transport via the secretory pathway. After virion release from the host cell, the assembly protein E3 is gradually released in the extracellular space. Its function is as follows. Plays a role in viral attachment to target host cell, by binding to the cell receptors VLDLR or LRP8/APOER2. Synthesized as a pE2 precursor which is processed by furin at the cell membrane just before virion budding, giving rise to E2-E1 heterodimer. The pE2-E1 heterodimer is stable, whereas E2-E1 is unstable and dissociate at low pH. pE2 is processed at the last step, presumably to avoid E1 fusion activation before its final export to cell surface. E2 C-terminus contains a transitory transmembrane that would be disrupted by palmitoylation, resulting in reorientation of the C-terminal tail from lumenal to cytoplasmic side. This step is critical since E2 C-terminus is involved in budding by interacting with capsid proteins. This release of E2 C-terminus in cytoplasm occurs lately in protein export, and precludes premature assembly of particles at the endoplasmic reticulum membrane. In terms of biological role, acts as a viroporin that participates in virus glycoprotein processing and transport to the plasma membrane, cell permeabilization and budding of viral particles. Disrupts the calcium homeostasis of the cell, probably at the endoplasmic reticulum level resulting in the increased levels of cytoplasmic calcium. Because of its lipophilic properties, the 6K protein is postulated to influence the selection of lipids that interact with the transmembrane domains of the glycoproteins, which, in turn, affects the deformability of the bilayer required for the extreme curvature that occurs as budding proceeds. Present in low amount in virions, about 3% compared to viral glycoproteins. Class II viral fusion protein. Fusion activity is inactive as long as E1 is bound to E2 in mature virion. After virus attachment to target cell via host VLDLR or LRP8/APOER2 and endocytosis, acidification of the endosome induces dissociation of E1/E2 heterodimer and concomitant trimerization of the E1 subunits. This E1 trimer is fusion active, and promotes release of viral nucleocapsid in cytoplasm after endosome and viral membrane fusion. Efficient fusion requires the presence of cholesterol and sphingolipid in the target membrane. In Acrocephalus scirpaceus (Eurasian reed-warbler), this protein is Structural polyprotein.